The following is a 213-amino-acid chain: Kynurenine formamidase (213 aa).

Substrate is bound at residue tryptophan 20. Zn(2+) contacts are provided by histidine 50, histidine 54, and aspartate 56. Histidine 60 (proton donor/acceptor) is an active-site residue. 2 residues coordinate Zn(2+): histidine 161 and glutamate 173.

Belongs to the Cyclase 1 superfamily. KynB family. In terms of assembly, homodimer. It depends on Zn(2+) as a cofactor.

It carries out the reaction N-formyl-L-kynurenine + H2O = L-kynurenine + formate + H(+). The protein operates within amino-acid degradation; L-tryptophan degradation via kynurenine pathway; L-kynurenine from L-tryptophan: step 2/2. Catalyzes the hydrolysis of N-formyl-L-kynurenine to L-kynurenine, the second step in the kynurenine pathway of tryptophan degradation. The chain is Kynurenine formamidase from Pseudomonas aeruginosa (strain UCBPP-PA14).